The chain runs to 71 residues: Augerpeptide-s7a (71 aa).

Positions 1 to 20 (MSALKFVLICGLVLLLIETI) are cleaved as a signal peptide. Positions 21–29 (PGVSLNLMR) are excised as a propeptide. 3 disulfide bridges follow: C36/C48, C42/C65, and C47/C68.

In terms of tissue distribution, expressed by the venom duct.

It localises to the secreted. Its function is as follows. Elicits an uncoordinated twisting syndrome when injected into C.elegans, but has no effect on mice. The chain is Augerpeptide-s7a from Terebra subulata (Chocolate spotted auger).